The following is a 503-amino-acid chain: EZH inhibitory protein (503 aa).

The span at 1-16 (MATQSDMEKEQKHQQD) shows a compositional bias: basic and acidic residues. Disordered regions lie at residues 1-72 (MATQ…AAAA), 97-462 (HSDR…RSIS), and 483-503 (VPPE…PPEP). Residues 41 to 72 (PAASVTTVSSQASPSGGAALSSSTAGSSAAAA) show a composition bias toward low complexity. Residues 97-107 (HSDRQDCRSPH) show a composition bias toward basic and acidic residues. A compositionally biased stretch (polar residues) spans 184–197 (YPCSGASTSSQATQ). Phosphoserine is present on serine 259. Low complexity predominate over residues 345–366 (LRSRSTQQRSALLSRRSLSGSA). The tract at residues 401 to 409 (WHAVRMRAS) is sufficient for interaction with EZH2. The interval 403–423 (AVRMRASSPSPPGRFFLPIPQ) is necessary and sufficient for inhibition of PRC2/EED-EZH1 and PRC2/EED-EZH2 complex activity. Residues 428-453 (SSSSSYASNSSSPSRSPGLSPSSPSP) show a composition bias toward low complexity.

As to quaternary structure, interacts with PRC2/EED-EZH1 complex member EZH1 and with PRC2/EED-EZH2 complex member EZH2; the interaction blocks EZH1/EZH2 methyltransferase activity. Interacts (via C-terminus) with SUZ12 which is a member of the PRC2/EED-EZH1 and PRC2/EED-EZH2 complexes. In terms of tissue distribution, in testis, detected in male germ cells inside the seminiferous tubules, especially in spermatogonia and round spermatids (at protein level). In the ovary, expressed in primordial follicles and oocytes but not the external follicle cells (at protein level).

The protein resides in the nucleus. The protein localises to the cytoplasm. Its function is as follows. Inhibits PRC2/EED-EZH1 and PRC2/EED-EZH2 complex function by inhibiting EZH1/EZH2 methyltransferase activity, thereby causing down-regulation of histone H3 trimethylation on 'Lys-27' (H3K27me3). Probably inhibits methyltransferase activity by limiting the stimulatory effect of cofactors such as AEBP2 and JARID2. Inhibits H3K27me3 deposition during spermatogenesis and oogenesis. The sequence is that of EZH inhibitory protein from Homo sapiens (Human).